The chain runs to 1228 residues: Multimerin-1 (1228 aa).

The first 19 residues, 1-19 (MKGARLFVLLSSLWSGGIG), serve as a signal peptide directing secretion. An N-linked (GlcNAc...) asparagine glycan is attached at N21. A disordered region spans residues 68 to 98 (TPEARTSEDSLLKSTLPPSETSAPAEGVRNQ). Residues 79–89 (LKSTLPPSETS) show a composition bias toward polar residues. N-linked (GlcNAc...) asparagine glycans are attached at residues N97, N114, and N120. A glycan (N-linked (GlcNAc...) (complex) asparagine) is linked at N136. A disordered region spans residues 157–200 (NTVGGTGGIGGVGGTGGVGNRAPRETYLSRGDSSSSQRTDYQKS). Residues 160–175 (GGTGGIGGVGGTGGVG) are compositionally biased toward gly residues. The Cell attachment site motif lies at 186–188 (RGD). Residues 187–200 (GDSSSSQRTDYQKS) are compositionally biased toward polar residues. The region spanning 207 to 282 (GKNWCAYVHT…PGYSGPKCQL (76 aa)) is the EMI domain. Disulfide bonds link C211–C272, C238–C245, and C271–C280. An O-linked (Fuc) threonine glycan is attached at T216. A glycan (O-linked (Fuc) threonine) is linked at T265. Coiled coils occupy residues 333–365 (MKLT…KVSE) and 400–430 (NDMQ…IQKV). An N-linked (GlcNAc...) asparagine glycan is attached at N344. 16 N-linked (GlcNAc...) asparagine glycosylation sites follow: N431, N507, N541, N576, N618, N680, N729, N783, N816, N828, N840, N921, N933, N942, N981, and N1020. Residues 503-523 (YESLNKTLSKLKEVHEQLLST) are a coiled coil. Coiled coils occupy residues 580–650 (SLEM…EILQ) and 675–726 (RKKI…EMED). Positions 819-869 (NFQKMYQMFNETTSQVRKYQQNMSHLEEKLLLTTKISKNFETRLQDIESKV) form a coiled coil. The region spanning 1041–1077 (EYSSCSRHPCQNGGTCINGRTSFTCACRHPFTGDNCT) is the EGF-like domain. Cystine bridges form between C1045-C1056, C1050-C1065, and C1067-C1076. An O-linked (Fuc) threonine glycan is attached at T1055. N-linked (GlcNAc...) asparagine glycosylation occurs at N1075. In terms of domain architecture, C1q spans 1096 to 1228 (RYAPMVAFFA…TFSGYLLYRT (133 aa)).

In terms of assembly, multimeric. Composed of varying sized, disulfide-linked multimers, the smallest of which is a homotrimer. Proteolysis of the promultimerin in the N-terminal region, leads to the mature p155 form that is stored in platelets. Interacts with factor V/Va. In terms of processing, the N-terminus is blocked. Extensively N-glycosylated. Post-translationally, O-fucosylated within the EMI domain (at Thr-216 and Thr-265) by FUT10/POFUT3 and FUT11/POFUT4. O-fucosylation at Thr-216 and Thr-1055 are required for facilitating protein folding and secretion. As to expression, synthesized by endothelial cells and megakaryocytes. Stored in platelet alpha granules and endothelial cell Weibel-Palade bodies, following activation of these cells, it is released and attached to megakaryocytes, platelets, endothelium and subendothelium of blood vessels. Not found in plasma. Found in vascular tissues such as placenta, lung, and liver.

The protein localises to the secreted. In terms of biological role, carrier protein for platelet (but not plasma) factor V/Va. Plays a role in the storage and stabilization of factor V in platelets. Upon release following platelet activation, may limit platelet and plasma factor Va-dependent thrombin generation. Ligand for integrin alpha-IIb/beta-3 and integrin alpha-V/beta-3 on activated platelets, and may function as an extracellular matrix or adhesive protein. This Homo sapiens (Human) protein is Multimerin-1 (MMRN1).